We begin with the raw amino-acid sequence, 483 residues long: Proline--tRNA ligase (483 aa).

The protein belongs to the class-II aminoacyl-tRNA synthetase family. ProS type 3 subfamily. In terms of assembly, homodimer.

Its subcellular location is the cytoplasm. It catalyses the reaction tRNA(Pro) + L-proline + ATP = L-prolyl-tRNA(Pro) + AMP + diphosphate. Catalyzes the attachment of proline to tRNA(Pro) in a two-step reaction: proline is first activated by ATP to form Pro-AMP and then transferred to the acceptor end of tRNA(Pro). The polypeptide is Proline--tRNA ligase (Natranaerobius thermophilus (strain ATCC BAA-1301 / DSM 18059 / JW/NM-WN-LF)).